The primary structure comprises 409 residues: Arginine deiminase (409 aa).

The active-site Amidino-cysteine intermediate is C399.

Belongs to the arginine deiminase family.

The protein localises to the cytoplasm. The catalysed reaction is L-arginine + H2O = L-citrulline + NH4(+). It functions in the pathway amino-acid degradation; L-arginine degradation via ADI pathway; carbamoyl phosphate from L-arginine: step 1/2. The protein is Arginine deiminase of Streptococcus pneumoniae (strain 70585).